Consider the following 221-residue polypeptide: GTP-binding nuclear protein Ran-B1 (221 aa).

Residues 10-174 (DYPSFKLVIV…LYLARKLAGD (165 aa)) enclose the Small GTPase Ran-type domain. 21–28 (DGGTGKTT) serves as a coordination point for GTP. Residues 40-48 (KKYEPTIGV) form a switch-I region. GTP contacts are provided by residues glycine 71, 125 to 128 (NKVD), and 153 to 155 (SAK). The tract at residues 71-87 (GQEKFGGLRDGYYIHGQ) is switch-II.

It belongs to the small GTPase superfamily. Ran family. In terms of assembly, found in a nuclear export complex with RanGTP, exportin and pre-miRNA.

It localises to the nucleus. GTP-binding protein involved in nucleocytoplasmic transport. Required for the import of protein into the nucleus and also for RNA export. Involved in chromatin condensation and control of cell cycle. This chain is GTP-binding nuclear protein Ran-B1 (RAN-B1), found in Nicotiana tabacum (Common tobacco).